Reading from the N-terminus, the 242-residue chain is Protein unc-119 homolog B-A (242 aa).

Positions 1 to 20 (MSGSKREAALTGQPKDERKK) are enriched in basic and acidic residues. A disordered region spans residues 1–49 (MSGSKREAALTGQPKDERKKSGGGVINRLKARRVQGKESGTSDQSSVTP). Polar residues predominate over residues 38–48 (ESGTSDQSSVT). Y133 provides a ligand contact to tetradecanoate.

It belongs to the PDE6D/unc-119 family.

Functionally, myristoyl-binding protein that acts as a cargo adapter: specifically binds the myristoyl moiety of a subset of N-terminally myristoylated proteins and is required for their localization. Plays a key role in localization of proteins to the primary cilium membrane. The chain is Protein unc-119 homolog B-A (unc119b-a) from Xenopus laevis (African clawed frog).